Consider the following 476-residue polypeptide: Proton-coupled amino acid transporter 1 (476 aa).

The segment covering 1–15 (MSTQRLRNEDYHDYS) has biased composition (basic and acidic residues). The interval 1–32 (MSTQRLRNEDYHDYSSTDVSPEESPSEGLNNL) is disordered. Topologically, residues 1–51 (MSTQRLRNEDYHDYSSTDVSPEESPSEGLNNLSSPGSYQRFGQSNSTTWFQ) are cytoplasmic. The helical transmembrane segment at 52–72 (TLIHLLKGNIGTGLLGLPLAV) threads the bilayer. Residues 73-78 (KNAGIV) lie on the Extracellular side of the membrane. The chain crosses the membrane as a helical span at residues 79–99 (MGPISLLIIGIVAVHCMGILV). The Cytoplasmic segment spans residues 100–141 (KCAHHFCRRLNKSFVDYGDTVMYGLESSPCSWLRNHAHWGRR). Residues 142–162 (VVDFFLIVTQLGFCCVYFVFL) traverse the membrane as a helical segment. Residues 163-190 (ADNFKQVIEAANGTTNNCHNNETVILTP) are Extracellular-facing. N174 and N183 each carry an N-linked (GlcNAc...) asparagine glycan. C180 and C329 are disulfide-bonded. A helical transmembrane segment spans residues 191-211 (TMDSRLYMLSFLPFLVLLVFI). Residues 212–215 (RNLR) lie on the Cytoplasmic side of the membrane. A helical transmembrane segment spans residues 216 to 236 (ALSIFSLLANITMLVSLVMIY). The Extracellular portion of the chain corresponds to 237–257 (QFIVQRIPDPSHLPLVAPWKT). A helical membrane pass occupies residues 258–278 (YPLFFGTAIFSFEGIGMVLPL). Topologically, residues 279–289 (ENKMKDPRKFP) are cytoplasmic. The chain crosses the membrane as a helical span at residues 290–310 (LILYLGMVIVTILYISLGCLG). Topologically, residues 311–342 (YLQFGANIQGSITLNLPNCWLYQSVKLLYSIG) are extracellular. Residues 343–363 (IFFTYALQFYVPAEIIIPFFV) form a helical membrane-spanning segment. At 364 to 372 (SRAPEHCEL) the chain is on the cytoplasmic side. Residues 373–393 (VVDLFVRTVLVCLTCILAILI) form a helical membrane-spanning segment. Residues 394–397 (PRLD) lie on the Extracellular side of the membrane. The helical transmembrane segment at 398-418 (LVISLVGSVSSSALALIIPPL) threads the bilayer. Over 419–439 (LEVTTFYSEGMSPLTIFKDAL) the chain is Cytoplasmic. Residues 440–460 (ISILGFVGFVVGTYEALYELI) form a helical membrane-spanning segment. At 461–476 (QPSNAPIFINSTCAFI) the chain is on the extracellular side. An N-linked (GlcNAc...) asparagine glycan is attached at N470.

This sequence belongs to the amino acid/polyamine transporter 2 family.

The protein localises to the cell membrane. It is found in the apical cell membrane. Its subcellular location is the lysosome membrane. It carries out the reaction glycine(in) + H(+)(in) = glycine(out) + H(+)(out). The enzyme catalyses L-alanine(in) + H(+)(in) = L-alanine(out) + H(+)(out). It catalyses the reaction D-alanine(in) + H(+)(in) = D-alanine(out) + H(+)(out). The catalysed reaction is L-proline(out) + H(+)(out) = L-proline(in) + H(+)(in). It carries out the reaction D-proline(out) + H(+)(out) = D-proline(in) + H(+)(in). The enzyme catalyses D-serine(out) + H(+)(out) = D-serine(in) + H(+)(in). It catalyses the reaction L-serine(in) + H(+)(in) = L-serine(out) + H(+)(out). The catalysed reaction is 4-aminobutanoate(in) + H(+)(in) = 4-aminobutanoate(out) + H(+)(out). It carries out the reaction beta-alanine(in) + H(+)(in) = beta-alanine(out) + H(+)(out). Its function is as follows. Electrogenic proton/amino acid symporter with selectivity for small apolar L-amino acids, their D-enantiomers and selected amino acid derivatives such as 4-aminobutanoate/GABA. May be involved in the efflux from the lysosomal compartment of neutral amino acids resulting from proteolysis. May play a role in specifying sites for exocytosis in neurons. In Homo sapiens (Human), this protein is Proton-coupled amino acid transporter 1.